A 120-amino-acid chain; its full sequence is MKFYFVEYFILFTYIIISFILACIISLLSYLLTTKKEDPEKTSAYECGFNPFDDTRTTFDVKFYLVAILFFNFCLEISFLFPWSIVLGNISYFGFVAIILFLFILTIGFIYEWKKGALNW.

3 consecutive transmembrane segments (helical) span residues Y8–L28, F63–W83, and I90–I110.

It belongs to the complex I subunit 3 family.

Its subcellular location is the mitochondrion membrane. It catalyses the reaction a ubiquinone + NADH + 5 H(+)(in) = a ubiquinol + NAD(+) + 4 H(+)(out). Functionally, core subunit of the mitochondrial membrane respiratory chain NADH dehydrogenase (Complex I) that is believed to belong to the minimal assembly required for catalysis. Complex I functions in the transfer of electrons from NADH to the respiratory chain. The immediate electron acceptor for the enzyme is believed to be ubiquinone. This is NADH-ubiquinone oxidoreductase chain 3 (ND3) from Cyanidium caldarium (Red alga).